A 102-amino-acid chain; its full sequence is Large ribosomal subunit protein bL21 (102 aa).

It belongs to the bacterial ribosomal protein bL21 family. In terms of assembly, part of the 50S ribosomal subunit. Contacts protein L20.

Its function is as follows. This protein binds to 23S rRNA in the presence of protein L20. The protein is Large ribosomal subunit protein bL21 of Stenotrophomonas maltophilia (strain K279a).